A 545-amino-acid polypeptide reads, in one-letter code: Chaperonin GroEL (545 aa).

ATP contacts are provided by residues 29 to 32 (TLGP), Lys50, 86 to 90 (DGTTT), Gly413, 479 to 481 (NAA), and Asp496. Residues 525–545 (KPEKEKAPAAAGAPDMGGMDF) are disordered. Positions 532–545 (PAAAGAPDMGGMDF) are enriched in low complexity.

The protein belongs to the chaperonin (HSP60) family. In terms of assembly, forms a cylinder of 14 subunits composed of two heptameric rings stacked back-to-back. Interacts with the co-chaperonin GroES.

The protein localises to the cytoplasm. It catalyses the reaction ATP + H2O + a folded polypeptide = ADP + phosphate + an unfolded polypeptide.. Its function is as follows. Together with its co-chaperonin GroES, plays an essential role in assisting protein folding. The GroEL-GroES system forms a nano-cage that allows encapsulation of the non-native substrate proteins and provides a physical environment optimized to promote and accelerate protein folding. The sequence is that of Chaperonin GroEL from Deinococcus geothermalis (strain DSM 11300 / CIP 105573 / AG-3a).